The following is a 344-amino-acid chain: Lipopolysaccharide heptosyltransferase 3 (344 aa).

It belongs to the glycosyltransferase 9 family.

It catalyses the reaction an L-alpha-D-Hep-(1-&gt;3)-4-O-phospho-L-alpha-D-Hep-(1-&gt;5)-[alpha-Kdo-(2-&gt;4)]-alpha-Kdo-(2-&gt;6)-lipid A + ADP-L-glycero-beta-D-manno-heptose = an L-alpha-D-Hep-(1-&gt;7)-L-alpha-D-Hep-(1-&gt;3)-4-O-phospho-L-alpha-D-Hep-(1-&gt;5)-[alpha-Kdo-(2-&gt;4)]-alpha-Kdo-(2-&gt;6)-lipid A + ADP + H(+). The catalysed reaction is L-alpha-D-Hep-(1-&gt;3)-4-O-phospho-L-alpha-D-Hep-(1-&gt;5)-[alpha-Kdo-(2-&gt;4)]-alpha-Kdo-(2-&gt;6)-lipid A (E. coli) + ADP-L-glycero-beta-D-manno-heptose = L-alpha-D-Hep-(1-&gt;7)-L-alpha-D-Hep-(1-&gt;3)-4-O-phospho-L-alpha-D-Hep-(1-&gt;5)-[alpha-Kdo-(2-&gt;4)]-alpha-Kdo-(2-&gt;6)-lipid A (E. coli) + ADP + H(+). Its pathway is bacterial outer membrane biogenesis; LPS core biosynthesis. Functionally, glycosyltransferase involved in the biosynthesis of the core oligosaccharide region of lipopolysaccharide (LPS). Catalyzes the addition of the third heptose unit (HepIII) to the second heptose unit (HepII) of the phospho-Hep2-Kdo2-lipid A module. This Escherichia coli (strain K12) protein is Lipopolysaccharide heptosyltransferase 3.